The chain runs to 92 residues: uncharacterized protein (92 aa).

Positions 24 to 89 constitute an HMA domain; the sequence is KQIVLKVKEM…AIHKLKYTAE (66 aa). 2 residues coordinate a metal cation: cysteine 35 and cysteine 38.

This is an uncharacterized protein from Haemophilus influenzae (strain ATCC 51907 / DSM 11121 / KW20 / Rd).